A 299-amino-acid chain; its full sequence is Circadian clock oscillator protein KaiA (299 aa).

Positions 1–135 (MQSPLSLCLF…LHLGPICTLP (135 aa)) are psR domain, binds oxidized quinones. Residues 1 to 169 (MQSPLSLCLF…RLADKLKERL (169 aa)) enclose the KaiA N-terminal domain. The flexible linker stretch occupies residues 170–178 (GYLGVYYKR). The region spanning 179 to 287 (KPSHFYRNFS…GEMYRRSIPR (109 aa)) is the KaiA C-terminal domain.

This sequence belongs to the KaiA family. As to quaternary structure, homodimer. The KaiABC1 complex composition changes during the circadian cycle to control KaiC1 phosphorylation. Complexes KaiC1(6), KaiA(2-4):KaiC1(6), KaiB(6):KaiC1(6) and KaiC1(6):KaiB(6):KaiA(12) are among the most important forms, many form cooperatively. KaiA and CikA bind to the same region of the KaiB(fs) form and therefore compete. Interacts with KaiC1 but not KaiC2 or KaiC3. Interacts with itself, not seen to interact with other Kai proteins.

In terms of biological role, key component of the KaiABC oscillator complex, which constitutes the main circadian regulator in cyanobacteria. Complex composition changes during the circadian cycle to control KaiC phosphorylation. KaiA stimulates KaiC autophosphorylation, while KaiB sequesters KaiA, leading to KaiC autodephosphorylation. KaiA binding to the KaiC CII domain during the subjective day yields KaiA(2-4):KaiC(6) complexes which stimulate KaiC autophosphorylation. Phospho-Ser-431 KaiC accumulation triggers binding of KaiB during the subjective night to form the KaiB(6):KaiC(6) complex, leading to changes in the output regulators CikA and SasA. KaiB(6):KaiC(6) formation exposes a site for KaiA binding on KaiB that sequesters KaiA from KaiC's CII domain, making the KaiC(6):KaiB(6):KaiA(12) complex resulting in KaiC autodephosphorylation. Complete dephosphorylation of KaiC leads to dissociation of KaiA(2):KaiB(1), completing 1 cycle of the Kai oscillator. Its function is as follows. Component of the oscillator and circadian clock in this organism, enhances fitness in a rhythmic environment. Stimulates KaiC1 to autophosphorylate, has no effect on the kinase activity of KaiC2 or KaiC3. Functionally, binds oxidized quinones via the N-terminal PsR domain, allowing it to sense redox changes and possibly mediate clock input. This Synechocystis sp. (strain ATCC 27184 / PCC 6803 / Kazusa) protein is Circadian clock oscillator protein KaiA.